A 96-amino-acid chain; its full sequence is MQIDDKLLARLESLAMIEVPEEKKESIKAELGEIVNFVENLNSLEVEGLEATFTTLEGKTPMREDTPMNDEEIPALILKHAPQSAENYFIVPKIIE.

This sequence belongs to the GatC family. As to quaternary structure, heterotrimer of A, B and C subunits.

It carries out the reaction L-glutamyl-tRNA(Gln) + L-glutamine + ATP + H2O = L-glutaminyl-tRNA(Gln) + L-glutamate + ADP + phosphate + H(+). The catalysed reaction is L-aspartyl-tRNA(Asn) + L-glutamine + ATP + H2O = L-asparaginyl-tRNA(Asn) + L-glutamate + ADP + phosphate + 2 H(+). In terms of biological role, allows the formation of correctly charged Asn-tRNA(Asn) or Gln-tRNA(Gln) through the transamidation of misacylated Asp-tRNA(Asn) or Glu-tRNA(Gln) in organisms which lack either or both of asparaginyl-tRNA or glutaminyl-tRNA synthetases. The reaction takes place in the presence of glutamine and ATP through an activated phospho-Asp-tRNA(Asn) or phospho-Glu-tRNA(Gln). This is Aspartyl/glutamyl-tRNA(Asn/Gln) amidotransferase subunit C from Wolinella succinogenes (strain ATCC 29543 / DSM 1740 / CCUG 13145 / JCM 31913 / LMG 7466 / NCTC 11488 / FDC 602W) (Vibrio succinogenes).